Here is a 138-residue protein sequence, read N- to C-terminus: Drosulfakinins (138 aa).

The N-terminal stretch at 1-33 is a signal peptide; it reads MGLRSCTHFATLVMPLWALAFCFLVLVPVPAQT. The propeptide occupies 34–73; the sequence is TSLQISKGDRRLQDLESNMGAESDQPNANLVGTSLSRFGD. Phenylalanine amide is present on phenylalanine 82. A propeptide spanning residues 86–108 is cleaved from the precursor; that stretch reads VPRPIIPIELDLLMDNDDENTKA. Tyrosine 114 carries the sulfotyrosine modification. Phenylalanine 119 is subject to Phenylalanine amide. Tyrosine 131 bears the Sulfotyrosine mark. Phenylalanine amide is present on phenylalanine 136.

It belongs to the gastrin/cholecystokinin family.

It is found in the secreted. Its function is as follows. Drosulfakinin-0 (DSK 0) plays diverse biological roles including regulating gut muscle contraction in adults but not in larvae. The chain is Drosulfakinins from Drosophila teissieri (Fruit fly).